Here is a 1009-residue protein sequence, read N- to C-terminus: Type VII secretion system accessory factor EsaA (1009 aa).

A helical membrane pass occupies residues 7-27; sequence IYALIVTLIIIIAIVSMIFFV. The segment covering 680–697 has biased composition (basic and acidic residues); that stretch reads TFAEEPQEPKIDKGKNDE. Residues 680-707 form a disordered region; sequence TFAEEPQEPKIDKGKNDEFNTMSSNLDK. Transmembrane regions (helical) follow at residues 822 to 842, 869 to 889, 903 to 923, 928 to 948, and 979 to 999; these read ISPT…AYIF, VITS…VGLI, KFIL…TYLL, SIGM…MNNL, and IGLV…LNMF.

It belongs to the EsaA family. Homodimer. Interacts with EssB.

Its subcellular location is the cell membrane. Component of the type VII secretion system (Ess). Provides together with EssB and other components such as EssC and EssE a secretion plateform accross the cytoplasmic membrane in the host. The sequence is that of Type VII secretion system accessory factor EsaA from Staphylococcus aureus (strain USA300).